Reading from the N-terminus, the 520-residue chain is Transcription factor MYB33 (520 aa).

Residues Met1–Arg24 are disordered. HTH myb-type domains lie at Gly29 to Leu81 and Arg82 to Gln136. 2 consecutive DNA-binding regions (H-T-H motif) follow at residues Trp57–Leu81 and Trp109–Ile132. The span at Ser331 to Pro342 shows a compositional bias: low complexity. 2 disordered regions span residues Ser331–Ser359 and Glu426–Leu447.

As to expression, mostly expressed in stems, shoot apices, flowers and floral shoot tips, and, to a lower extent, in roots (e.g. root tips), seedlings, leaves and siliques.

The protein resides in the nucleus. In terms of biological role, transcriptional activator of alpha-amylase expression that binds to 5'-CAACTGTC-3' motif in target gene promoter. Positive regulator of abscisic acid (ABA) responses leading to growth arrest during seed germination. In vegetative tissues, inhibits growth by reducing cell proliferation. Promotes the expression of aleurone-related genes (e.g. CP1, CP, GASA1, BXL1 and BXL2) in seeds. Together with MYB65 and MYB101, promotes the programmed cell death (PCD) the vacuolation of protein storage vacuoles (PSVs) in the aleurone layers during seed germination. Binds to a GARE site (GA-response element) in the LEAFY promoter, essential for its gibberellic acid (GA)-mediated induction. Together with MYB65, facilitates anther and tapetum development. This Arabidopsis thaliana (Mouse-ear cress) protein is Transcription factor MYB33.